A 304-amino-acid polypeptide reads, in one-letter code: Ribonuclease Z (304 aa).

Zn(2+) is bound by residues His63, His65, Asp67, His68, His143, Asp213, and His271. Asp67 serves as the catalytic Proton acceptor.

It belongs to the RNase Z family. Homodimer. It depends on Zn(2+) as a cofactor.

The enzyme catalyses Endonucleolytic cleavage of RNA, removing extra 3' nucleotides from tRNA precursor, generating 3' termini of tRNAs. A 3'-hydroxy group is left at the tRNA terminus and a 5'-phosphoryl group is left at the trailer molecule.. Zinc phosphodiesterase, which displays some tRNA 3'-processing endonuclease activity. Probably involved in tRNA maturation, by removing a 3'-trailer from precursor tRNA. The protein is Ribonuclease Z of Porphyromonas gingivalis (strain ATCC 33277 / DSM 20709 / CIP 103683 / JCM 12257 / NCTC 11834 / 2561).